The chain runs to 116 residues: Peptidyl-tRNA hydrolase (116 aa).

It belongs to the PTH2 family.

Its subcellular location is the cytoplasm. It carries out the reaction an N-acyl-L-alpha-aminoacyl-tRNA + H2O = an N-acyl-L-amino acid + a tRNA + H(+). The natural substrate for this enzyme may be peptidyl-tRNAs which drop off the ribosome during protein synthesis. The protein is Peptidyl-tRNA hydrolase of Methanococcus maripaludis (strain C6 / ATCC BAA-1332).